The chain runs to 418 residues: Translation initiation factor 2 subunit gamma (418 aa).

Positions 7 to 206 (QPEVNIGVVG…GIQKYIPTPQ (200 aa)) constitute a tr-type G domain. The segment at 16–23 (GHVDHGKT) is G1. Mg(2+) contacts are provided by Asp-19, Thr-23, Gly-44, and Thr-46. 19 to 24 (DHGKTT) serves as a coordination point for GTP. The G2 stretch occupies residues 44–48 (GMTIK). 4 residues coordinate Zn(2+): Cys-59, Cys-62, Cys-74, and Cys-77. Residues 93–96 (DAPG) are G3. Residues 149 to 152 (NKVD) and 184 to 186 (SAL) each bind GTP. The segment at 149–152 (NKVD) is G4. The interval 184–186 (SAL) is G5.

Belongs to the TRAFAC class translation factor GTPase superfamily. Classic translation factor GTPase family. EIF2G subfamily. As to quaternary structure, heterotrimer composed of an alpha, a beta and a gamma chain. Mg(2+) serves as cofactor.

It catalyses the reaction GTP + H2O = GDP + phosphate + H(+). EIF-2 functions in the early steps of protein synthesis by forming a ternary complex with GTP and initiator tRNA. This Sulfurisphaera tokodaii (strain DSM 16993 / JCM 10545 / NBRC 100140 / 7) (Sulfolobus tokodaii) protein is Translation initiation factor 2 subunit gamma.